Consider the following 59-residue polypeptide: Movement protein TGBp3 (59 aa).

The Lumenal portion of the chain corresponds to 1-3 (MHL). The chain crosses the membrane as a helical span at residues 4–21 (AIVGALTLVLTLFVLHYT). The Cytoplasmic segment spans residues 22-59 (TKDDRCYILINGHSAFTNCPASPDLAKVISQLKPHNHG).

It belongs to the Tymovirales TGBp3 protein family.

It is found in the host endoplasmic reticulum membrane. In terms of biological role, plays a role in viral cell-to-cell propagation, by facilitating genome transport to neighboring plant cells through plasmosdesmata. May induce the formation of granular vesicles derived from the Endoplasmic reticulum, which align on actin filaments. This is Movement protein TGBp3 from Chenopodium album (Fat hen).